The sequence spans 411 residues: 6-hydroxytryprostatin B O-methyltransferase (411 aa).

Aspartate 270 serves as a coordination point for S-adenosyl-L-methionine. Catalysis depends on histidine 313, which acts as the Proton acceptor.

It belongs to the class I-like SAM-binding methyltransferase superfamily. Cation-independent O-methyltransferase family. In terms of assembly, homodimer.

It carries out the reaction 6-hydroxytryprostatin B + S-adenosyl-L-methionine = tryprostatin A + S-adenosyl-L-homocysteine + H(+). It functions in the pathway alkaloid biosynthesis. Its function is as follows. 6-hydroxytryprostatin B O-methyltransferase; part of the gene cluster that mediates the biosynthesis of fumitremorgins, indole alkaloids that carry not only intriguing chemical structures, but also interesting biological and pharmacological activities. The biosynthesis of fumitremorgin-type alkaloids begins by condensation of the two amino acids L-tryptophan and L-proline to brevianamide F, catalyzed by the non-ribosomal peptide synthetase ftmPS/ftmA. Brevianamide F is then prenylated by the prenyltransferase ftmPT1/ftmB in the presence of dimethylallyl diphosphate, resulting in the formation of tryprostatin B. The three cytochrome P450 monooxygenases, ftmP450-1/ftmC, ftmP450-2/ftmE and ftmP450-3/FtmG, are responsible for the conversion of tryprostatin B to 6-hydroxytryprostatin B, tryprostatin A to fumitremorgin C and fumitremorgin C to 12,13-dihydroxyfumitremorgin C, respectively. The putative methyltransferase ftmMT/ftmD is expected for the conversion of 6-hydroxytryprostatin B to tryprostatin A. FtmPT2/FtmH catalyzes the prenylation of 12,13-dihydroxyfumitre-morgin C in the presence of dimethylallyl diphosphate, resulting in the formation of fumitremorgin B. Fumitremorgin B is further converted to verruculogen by ftmOx1/ftmF via the insertion of an endoperoxide bond between the two prenyl moieties. Finally, verruculogen is further converted to fumitremorgin A by the verruculogen prenyltransferase ftmPT3. The polypeptide is 6-hydroxytryprostatin B O-methyltransferase (Neosartorya fischeri (strain ATCC 1020 / DSM 3700 / CBS 544.65 / FGSC A1164 / JCM 1740 / NRRL 181 / WB 181) (Aspergillus fischerianus)).